The following is a 446-amino-acid chain: Histidine--tRNA ligase (446 aa).

It belongs to the class-II aminoacyl-tRNA synthetase family. As to quaternary structure, homodimer.

It is found in the cytoplasm. It catalyses the reaction tRNA(His) + L-histidine + ATP = L-histidyl-tRNA(His) + AMP + diphosphate + H(+). The protein is Histidine--tRNA ligase of Paraburkholderia phytofirmans (strain DSM 17436 / LMG 22146 / PsJN) (Burkholderia phytofirmans).